A 203-amino-acid chain; its full sequence is Endo-type membrane-bound lytic murein transglycosylase A (203 aa).

Residues 1–15 (MKLRWFAFLIVLLAG) form the signal peptide. Cysteine 16 carries the N-palmitoyl cysteine lipid modification. The S-diacylglycerol cysteine moiety is linked to residue cysteine 16.

This sequence belongs to the transglycosylase Slt family.

It localises to the cell outer membrane. The catalysed reaction is Endolytic cleavage of the (1-&gt;4)-beta-glycosidic linkage between N-acetylmuramic acid (MurNAc) and N-acetylglucosamine (GlcNAc) residues in peptidoglycan with concomitant formation of a 1,6-anhydrobond in the MurNAc residue.. In terms of biological role, murein-degrading enzyme. May play a role in recycling of muropeptides during cell elongation and/or cell division. Preferentially cleaves at a distance of more than two disaccharide units from the ends of the glycan chain. This Escherichia coli (strain K12 / MC4100 / BW2952) protein is Endo-type membrane-bound lytic murein transglycosylase A.